The chain runs to 207 residues: 5-amino-6-(5-phosphoribosylamino)uracil reductase (207 aa).

Serine 6 contacts substrate. Residue tryptophan 8 coordinates NADP(+). A substrate-binding site is contributed by arginine 22. Aspartate 38 lines the NADP(+) pocket. Leucine 42 and arginine 45 together coordinate substrate. Serine 72 provides a ligand contact to NADP(+). Residue glutamate 137 coordinates substrate.

This sequence belongs to the HTP reductase family.

The enzyme catalyses 5-amino-6-(5-phospho-D-ribitylamino)uracil + NADP(+) = 5-amino-6-(5-phospho-D-ribosylamino)uracil + NADPH + H(+). It functions in the pathway cofactor biosynthesis; riboflavin biosynthesis; 5-amino-6-(D-ribitylamino)uracil from GTP: step 3/4. The polypeptide is 5-amino-6-(5-phosphoribosylamino)uracil reductase (ribD2) (Buchnera aphidicola subsp. Acyrthosiphon pisum (strain APS) (Acyrthosiphon pisum symbiotic bacterium)).